The primary structure comprises 56 residues: Large ribosomal subunit protein bL32 (56 aa).

Residues 1 to 34 (MAVQQNKKSRSKRGMRRSHDSLSTAQLSVDATSG) form a disordered region. The segment covering 7 to 16 (KKSRSKRGMR) has biased composition (basic residues). A compositionally biased stretch (polar residues) spans 21-31 (SLSTAQLSVDA).

The protein belongs to the bacterial ribosomal protein bL32 family.

The polypeptide is Large ribosomal subunit protein bL32 (Shewanella frigidimarina (strain NCIMB 400)).